Consider the following 558-residue polypeptide: Phosphatidylserine lipase ABHD16A (558 aa).

The next 2 helical transmembrane spans lie at 60-80 and 93-113; these read ILALASVFWSISYYSSPFAFF and VVPFSHYAGTLLLLLAGVACL. The Cytoplasmic portion of the chain corresponds to 114–558; the sequence is RGIGRWTNPQ…AQHFQMPWHL (445 aa). One can recognise an AB hydrolase-1 domain in the interval 281-406; sequence LVICCEGNAG…ALVTRTVRQH (126 aa). Active-site charge relay system residues include serine 355, aspartate 430, and histidine 507.

It belongs to the AB hydrolase superfamily. ABHD16 family.

It is found in the membrane. The catalysed reaction is 1-heptadecanoyl-2-(5Z,8Z,11Z,14Z-eicosatetraenoyl)-sn-glycero-3-phosphoserine + H2O = 1-heptadecanoyl-sn-glycero-3-phosphoserine + (5Z,8Z,11Z,14Z)-eicosatetraenoate + H(+). The enzyme catalyses 1-hexadecanoyl-2-(9Z-octadecenoyl)-sn-glycero-3-phospho-L-serine + H2O = 1-hexadecanoyl-sn-glycero-3-phospho-L-serine + (9Z)-octadecenoate + H(+). It carries out the reaction 1-octadecanoyl-2-(9Z,12Z-octadecadienoyl)-sn-glycero-3-phosphoserine + H2O = 1-octadecanoyl-sn-glycero-3-phosphoserine + (9Z,12Z)-octadecadienoate + H(+). It catalyses the reaction 1-heptadecanoyl-2-(5Z,8Z,11Z,14Z-eicosatetraenoyl)-sn-glycero-3-phosphocholine + H2O = 1-heptadecanoyl-sn-glycero-3-phosphocholine + (5Z,8Z,11Z,14Z)-eicosatetraenoate + H(+). The catalysed reaction is 1-hexadecanoyl-2-(9Z-octadecenoyl)-sn-glycero-3-phosphoglycerol + H2O = 1-hexadecanoyl-sn-glycero-3-phosphoglycerol + (9Z)-octadecenoate + H(+). The enzyme catalyses 1-hexadecanoyl-2-(9Z-octadecenoyl)-sn-glycero-3-phospho-(1D-myo-inositol) + H2O = 1-hexadecanoyl-sn-glycero-3-phospho-(1D-myo-inositol) + (9Z)-octadecenoate + H(+). It carries out the reaction 1-heptadecanoyl-2-(5Z,8Z,11Z,14Z-eicosatetraenoyl)-sn-glycero-3-phosphoethanolamine + H2O = 1-heptadecanoyl-sn-glycero-3-phosphoethanolamine + (5Z,8Z,11Z,14Z)-eicosatetraenoate + H(+). It catalyses the reaction 1-hexadecanoyl-2-(9Z-octadecenoyl)-sn-glycero-3-phospho-(1'-sn-glycerol) + H2O = 1-hexadecanoyl-sn-glycero-3-phospho-(1'-sn-glycerol) + (9Z)-octadecenoate + H(+). The catalysed reaction is Hydrolyzes glycerol monoesters of long-chain fatty acids.. The enzyme catalyses 1-tetradecanoylglycerol + H2O = tetradecanoate + glycerol + H(+). It carries out the reaction 2-hexadecanoylglycerol + H2O = glycerol + hexadecanoate + H(+). It catalyses the reaction 1-(9Z-octadecenoyl)-glycerol + H2O = glycerol + (9Z)-octadecenoate + H(+). The catalysed reaction is 2-(9Z-octadecenoyl)-glycerol + H2O = glycerol + (9Z)-octadecenoate + H(+). The enzyme catalyses 2-(9Z,12Z-octadecadienoyl)-glycerol + H2O = (9Z,12Z)-octadecadienoate + glycerol + H(+). It carries out the reaction 1-(5Z,8Z,11Z,14Z-eicosatetraenoyl)-glycerol + H2O = glycerol + (5Z,8Z,11Z,14Z)-eicosatetraenoate + H(+). It catalyses the reaction 2-(5Z,8Z,11Z,14Z-eicosatetraenoyl)-glycerol + H2O = glycerol + (5Z,8Z,11Z,14Z)-eicosatetraenoate + H(+). The catalysed reaction is prostaglandin D2-1-glycerol ester + H2O = prostaglandin D2 + glycerol + H(+). The enzyme catalyses 2-glyceryl-15-deoxy-Delta(12,14)-prostaglandin J2 + H2O = 15-deoxy-Delta(12,14)-prostaglandin J2 + glycerol + H(+). It carries out the reaction 1-(9Z,12Z-octadecadienoyl)-glycerol + H2O = (9Z,12Z)-octadecadienoate + glycerol + H(+). With respect to regulation, specifically inhibited by alpha-alkylidene-beta-lactone KC01 ((Z)-6-(2-Oxo-4-tridecyloxetan-3-ylidene)hexanamide). Functionally, phosphatidylserine (PS) lipase that mediates the hydrolysis of phosphatidylserine to generate lysophosphatidylserine (LPS). LPS constitutes a class of signaling lipids that regulates immunological and neurological processes. Has no activity towards diacylglycerol, triacylglycerol or lysophosphatidylserine lipase. Also has monoacylglycerol lipase activity, with preference for 1-(9Z,12Z-octadecadienoyl)-glycerol (1-LG) and 2-glyceryl-15-deoxy-Delta(12,14)-prostaglandin J2 (15d-PGJ(2)-G). This is Phosphatidylserine lipase ABHD16A from Mus musculus (Mouse).